We begin with the raw amino-acid sequence, 589 residues long: MDVRRRPVTKTLTAGEPLKSQNQHSSSLKASDALPLPLYLTNGLFFTMFFSVMYFLLHRWREKIRNSVPLHVVTLSELAALVLLVASVIYLLGFFGIGFVQSLIRPSPDSWDILEDDNAILEEDSRCEPCAAAIDCSLPPNLKIARMVPQKHKSAFADVVEEQKQSASATIIDEDEEIINAVVAGTTPSYSLESKLGDCLKAAAIRREALQRITGKSLDGLPLDGFDYESILGQCCEMPVGYVQVPVGIAGPLLLNETEYSVPMATTEGCLVASTNRGCKAIYASGGATSVLLKDGMTRAPVVRFGSAKRAAELKFFLEDPMNFETLALVFNKSSRFGRLQGIKCAIAGKNLYMRFTCSTGDAMGMNMVSKGVQNVLDFLQNDFPDMDVMGISGNYCSDKKPAAVNWIEGRGKSVVCEAIIKEEVVKKVLKTNVAALVELNMLKNLAGSAVAGALGGFNAHASNIVSAVYVAAGQDPAQNIESSHCITMMEAVNDGKDLHISVTMPSIEVGTVGGGTQLASQSACLNLLGVKGASKESPGPNSRLLASIVAGSVLAGELSLMSALAAGQLVKSHMKFNRSSKDVSKLSS.

Residues 1–35 (MDVRRRPVTKTLTAGEPLKSQNQHSSSLKASDALP) lie on the Lumenal side of the membrane. A helical transmembrane segment spans residues 36–56 (LPLYLTNGLFFTMFFSVMYFL). The Cytoplasmic segment spans residues 57–79 (LHRWREKIRNSVPLHVVTLSELA). The helical transmembrane segment at 80–100 (ALVLLVASVIYLLGFFGIGFV) threads the bilayer. At 101 to 544 (QSLIRPSPDS…SKESPGPNSR (444 aa)) the chain is on the lumenal side. An N-linked (GlcNAc...) asparagine glycan is attached at asparagine 256. Residue glutamate 268 is the Charge relay system of the active site. A glycan (N-linked (GlcNAc...) asparagine) is linked at asparagine 332. Residues lysine 400 and aspartate 476 each act as charge relay system in the active site. The helical transmembrane segment at 545 to 565 (LLASIVAGSVLAGELSLMSAL) threads the bilayer. Topologically, residues 566–589 (AAGQLVKSHMKFNRSSKDVSKLSS) are cytoplasmic. Histidine 574 (proton donor) is an active-site residue.

Belongs to the HMG-CoA reductase family.

The protein localises to the endoplasmic reticulum membrane. It catalyses the reaction (R)-mevalonate + 2 NADP(+) + CoA = (3S)-3-hydroxy-3-methylglutaryl-CoA + 2 NADPH + 2 H(+). The protein operates within metabolic intermediate biosynthesis; (R)-mevalonate biosynthesis; (R)-mevalonate from acetyl-CoA: step 3/3. Catalyzes the synthesis of mevalonate, the specific precursor of all isoprenoid compounds present in plants. Component of the triterpene saponins (e.g. ginsenosides or panaxosides) and phytosterols biosynthetic pathways. Promotes triterpenes accumulation in roots. The chain is 3-hydroxy-3-methylglutaryl coenzyme A reductase 2-B from Panax ginseng (Korean ginseng).